A 269-amino-acid polypeptide reads, in one-letter code: Histone deacetylase HDT1 (269 aa).

The tract at residues 97–269 is disordered; sequence PFEEEEDDED…HSKAKHSAGK (173 aa). Acidic residues-rich tracts occupy residues 98-115 and 153-179; these read FEEEEDDEDDYDESDEDI and KDDEDESSDDDDSDMGEDEDDSDDSEE. The span at 228–238 shows a compositional bias: polar residues; the sequence is PSKQASKTPKS. The C2H2-type zinc-finger motif lies at 242–265; that stretch reads HHCKPCNRSFGSEGALDSHSKAKH.

The protein belongs to the histone deacetylase HD2 family. In terms of tissue distribution, predominantly expressed in ovaries. Accumulates predominantly in the micropylar region of the ovule's integument.

Its subcellular location is the nucleus. The protein localises to the nucleolus. Functionally, mediates the deacetylation of lysine residues on the N-terminal part of the core histones (H2A, H2B, H3 and H4). Histone deacetylation gives a tag for epigenetic repression and plays an important role in transcriptional regulation, cell cycle progression and developmental events. In Solanum chacoense (Chaco potato), this protein is Histone deacetylase HDT1 (HDT1).